The chain runs to 261 residues: 3-deoxy-manno-octulosonate cytidylyltransferase (261 aa).

Belongs to the KdsB family.

It localises to the cytoplasm. It catalyses the reaction 3-deoxy-alpha-D-manno-oct-2-ulosonate + CTP = CMP-3-deoxy-beta-D-manno-octulosonate + diphosphate. It participates in nucleotide-sugar biosynthesis; CMP-3-deoxy-D-manno-octulosonate biosynthesis; CMP-3-deoxy-D-manno-octulosonate from 3-deoxy-D-manno-octulosonate and CTP: step 1/1. It functions in the pathway bacterial outer membrane biogenesis; lipopolysaccharide biosynthesis. Activates KDO (a required 8-carbon sugar) for incorporation into bacterial lipopolysaccharide in Gram-negative bacteria. This is 3-deoxy-manno-octulosonate cytidylyltransferase from Dechloromonas aromatica (strain RCB).